A 318-amino-acid polypeptide reads, in one-letter code: Nodulation protein D (318 aa).

The HTH lysR-type domain occupies 6 to 63; the sequence is LDLNLLVALDALMTERKLTAAARSINLSQPAMSAAIGRLRAYFNDELFLMQQRRLVPT. The H-T-H motif DNA-binding region spans 23 to 42; that stretch reads LTAAARSINLSQPAMSAAIG.

The protein belongs to the LysR transcriptional regulatory family.

NodD regulates the expression of the nodABCFE genes which encode other nodulation proteins. NodD is also a negative regulator of its own expression. Binds flavonoids as inducers. The protein is Nodulation protein D (nodD) of Rhizobium leguminosarum bv. trifolii.